The chain runs to 766 residues: Probable beta-glucosidase K (766 aa).

Asparagine 19 is a glycosylation site (N-linked (GlcNAc...) asparagine). Aspartate 196 is a catalytic residue. N-linked (GlcNAc...) asparagine glycosylation is found at asparagine 288, asparagine 453, and asparagine 748. The PA14 domain occupies 369–528 (EGQPGLGMRF…DPERAIARAV (160 aa)). Positions 726 to 766 (LGRRGRSGSSPAVYRGRSNNVVNRTSHQGAQRISKGGFAAR) are disordered. Polar residues predominate over residues 742–756 (RSNNVVNRTSHQGAQ).

Belongs to the glycosyl hydrolase 3 family.

It localises to the secreted. It catalyses the reaction Hydrolysis of terminal, non-reducing beta-D-glucosyl residues with release of beta-D-glucose.. Its pathway is glycan metabolism; cellulose degradation. Functionally, beta-glucosidases are one of a number of cellulolytic enzymes involved in the degradation of cellulosic biomass. Catalyzes the last step releasing glucose from the inhibitory cellobiose. This Aspergillus fumigatus (strain CBS 144.89 / FGSC A1163 / CEA10) (Neosartorya fumigata) protein is Probable beta-glucosidase K (bglK).